The primary structure comprises 479 residues: Xylose isomerase (479 aa).

His-144 is an active-site residue. Residues Glu-275, Glu-311, His-314, Asp-339, Asp-350, Asp-352, and Tyr-382 each contribute to the Mn(2+) site.

This sequence belongs to the xylose isomerase family. As to quaternary structure, homodimer. The cofactor is Mn(2+).

The catalysed reaction is alpha-D-xylose = alpha-D-xylulofuranose. This Hordeum vulgare (Barley) protein is Xylose isomerase (XYLA).